The primary structure comprises 92 residues: Toxin RelE3 (92 aa).

The protein belongs to the RelE toxin family.

Toxic component of a type II toxin-antitoxin (TA) system. Its toxic effect is neutralized by coexpression with cognate antitoxin RelB3 but no other ParD or RelB antitoxin. This Caulobacter vibrioides (strain ATCC 19089 / CIP 103742 / CB 15) (Caulobacter crescentus) protein is Toxin RelE3 (relE3).